Reading from the N-terminus, the 227-residue chain is MMLHIPGVLTKEQVAQCRDILDAADWADGNATSGAQSALAKRNRQLPEGSPAARAIGDAIQDALARNALFFSAALPLKVFPPLFNRYAGGDAFGTHVDNAIRLLRGTDFRVRSDLSATLFLEEPDAYDGGELCVEDTYGVHRAKLPAGDMVLYPASSLHHVTPVTRGERVASFFWIQSMVRDDADRTLLFQLDTQIQQLTAEKGGRDASVIALTGIYHNLLRRWADA.

The Fe2OG dioxygenase domain occupies 78–178; that stretch reads KVFPPLFNRY…RVASFFWIQS (101 aa). Residues His-96, Asp-98, and His-159 each contribute to the Fe cation site. Residue Arg-169 participates in 2-oxoglutarate binding.

Fe(2+) is required as a cofactor. Requires L-ascorbate as cofactor.

The protein is PKHD-type hydroxylase BTH_II1201 of Burkholderia thailandensis (strain ATCC 700388 / DSM 13276 / CCUG 48851 / CIP 106301 / E264).